The following is a 269-amino-acid chain: Troponin I (269 aa).

Residues Met1–Arg104 are disordered. Ala2 is modified (N-acetylalanine). A compositionally biased stretch (low complexity) spans Ala9–Pro50. Basic and acidic residues predominate over residues Asp56 to Lys91. Residues Glu162–Lys171 are troponin T-interaction. The segment at Asn189–Pro202 is actin-binding. An N6,N6,N6-trimethyllysine mark is found at Lys201 and Lys205. The interval Thr239–Ala269 is disordered.

It belongs to the troponin I family. As to quaternary structure, binds to actin and tropomyosin. As to expression, all isoforms are expressed in somatic muscle. Isoforms containing exon 6a1 (isoforms 1 and 2) are expressed in all muscles but highest expression is in abdominal muscle and splanchnic muscle of the gut. Isoforms containing exon 6b1 (isoforms 5, 6, 9 and 10) are highly expressed in the tergal depressor of trochanter (TDT) muscle.

Its function is as follows. Troponin I is the ATPase inhibitory subunit of troponin in the thin filament regulatory complex. Involved in the development and maintenance of muscle and nervous system. May also be involved in the cytoskeletal apparatus. The sequence is that of Troponin I (wupA) from Drosophila melanogaster (Fruit fly).